A 167-amino-acid chain; its full sequence is Leptin (167 aa).

The signal sequence occupies residues 1–21; the sequence is MHCVPLFCFLWFCHHLYYSQA. Cys117 and Cys167 form a disulfide bridge.

The protein belongs to the leptin family.

It localises to the secreted. Functionally, key player in the regulation of energy balance and body weight control. Once released into the circulation, has central and peripheral effects by binding LEPR, found in many tissues, which results in the activation of several major signaling pathways. In the hypothalamus, acts as an appetite-regulating factor that induces a decrease in food intake and an increase in energy consumption by inducing anorexinogenic factors and suppressing orexigenic neuropeptides, also regulates bone mass and secretion of hypothalamo-pituitary-adrenal hormones. In the periphery, increases basal metabolism, influences reproductive function, regulates pancreatic beta-cell function and insulin secretion, is pro-angiogenic for endothelial cell and affects innate and adaptive immunity. In the arcuate nucleus of the hypothalamus, activates by depolarization POMC neurons inducing FOS and SOCS3 expression to release anorexigenic peptides and inhibits by hyperpolarization NPY neurons inducing SOCS3 with a consequent reduction on release of orexigenic peptides. In addition to its known satiety inducing effect, has a modulatory role in nutrient absorption. In the intestine, reduces glucose absorption by enterocytes by activating PKC and leading to a sequential activation of p38, PI3K and ERK signaling pathways which exerts an inhibitory effect on glucose absorption. Acts as a growth factor on certain tissues, through the activation of different signaling pathways increases expression of genes involved in cell cycle regulation such as CCND1, via JAK2-STAT3 pathway, or VEGFA, via MAPK1/3 and PI3K-AKT1 pathways. May also play an apoptotic role via JAK2-STAT3 pathway and up-regulation of BIRC5 expression. Pro-angiogenic, has mitogenic activity on vascular endothelial cells and plays a role in matrix remodeling by regulating the expression of matrix metalloproteinases (MMPs) and tissue inhibitors of metalloproteinases (TIMPs). In innate immunity, modulates the activity and function of neutrophils by increasing chemotaxis and the secretion of oxygen radicals. Increases phagocytosis by macrophages and enhances secretion of pro-inflammatory mediators. Increases cytotoxic ability of NK cells. Plays a pro-inflammatory role, in synergy with IL1B, by inducing NOS2 which promotes the production of IL6, IL8 and Prostaglandin E2, through a signaling pathway that involves JAK2, PI3K, MAP2K1/MEK1 and MAPK14/p38. In adaptive immunity, promotes the switch of memory T-cells towards T helper-1 cell immune responses. Increases CD4(+)CD25(-) T-cell proliferation and reduces autophagy during TCR (T-cell receptor) stimulation, through MTOR signaling pathway activation and BCL2 up-regulation. In Sminthopsis crassicaudata (Fat-tailed dunnart), this protein is Leptin (LEP).